A 33-amino-acid polypeptide reads, in one-letter code: Cytochrome b6-f complex subunit 8 (33 aa).

A helical membrane pass occupies residues 2 to 22 (LFTLGWASLAAMFSFSIAMVV).

The protein belongs to the PetN family. The 4 large subunits of the cytochrome b6-f complex are cytochrome b6, subunit IV (17 kDa polypeptide, PetD), cytochrome f and the Rieske protein, while the 4 small subunits are PetG, PetL, PetM and PetN. The complex functions as a dimer.

The protein localises to the cellular thylakoid membrane. In terms of biological role, component of the cytochrome b6-f complex, which mediates electron transfer between photosystem II (PSII) and photosystem I (PSI), cyclic electron flow around PSI, and state transitions. This is Cytochrome b6-f complex subunit 8 from Synechococcus sp. (strain CC9605).